A 95-amino-acid chain; its full sequence is Putative RelE-like toxin protein (95 aa).

Belongs to the RelE toxin family.

Functionally, toxic component of a type II toxin-antitoxin (TA) system. This chain is Putative RelE-like toxin protein, found in Escherichia coli.